The sequence spans 1777 residues: FERM and PDZ domain-containing protein 3 (1777 aa).

The 78-residue stretch at Gln-21–His-98 folds into the PDZ domain. The FERM domain occupies Asn-147–Arg-461. Disordered regions lie at residues Thr-491–Pro-520, Glu-555–Glu-574, Gln-622–Leu-697, Ser-832–Arg-871, Ser-1014–Leu-1216, Arg-1309–Pro-1346, and Gln-1732–Met-1765. A compositionally biased stretch (polar residues) spans Tyr-502 to Arg-511. Residues Glu-555–Pro-564 are compositionally biased toward basic and acidic residues. Acidic residues predominate over residues Ser-649–Thr-659. Polar residues-rich tracts occupy residues Pro-840–Ser-850, Ala-1015–Arg-1035, His-1046–Val-1056, and Leu-1094–Ser-1111. Low complexity predominate over residues Gln-1134 to Arg-1168. Residues Pro-1172–Glu-1202 show a composition bias toward polar residues. A compositionally biased stretch (low complexity) spans Gln-1732–Ala-1751.

This is FERM and PDZ domain-containing protein 3 from Homo sapiens (Human).